A 296-amino-acid polypeptide reads, in one-letter code: Acetylglutamate kinase (296 aa).

Residues 66-67 (GG), R88, and N191 contribute to the substrate site.

The protein belongs to the acetylglutamate kinase family. ArgB subfamily.

It localises to the cytoplasm. The enzyme catalyses N-acetyl-L-glutamate + ATP = N-acetyl-L-glutamyl 5-phosphate + ADP. It participates in amino-acid biosynthesis; L-arginine biosynthesis; N(2)-acetyl-L-ornithine from L-glutamate: step 2/4. In terms of biological role, catalyzes the ATP-dependent phosphorylation of N-acetyl-L-glutamate. In Lawsonia intracellularis (strain PHE/MN1-00), this protein is Acetylglutamate kinase.